The sequence spans 92 residues: Small ribosomal subunit protein uS19c (92 aa).

This sequence belongs to the universal ribosomal protein uS19 family.

The protein resides in the plastid. The protein localises to the chloroplast. In terms of biological role, protein S19 forms a complex with S13 that binds strongly to the 16S ribosomal RNA. This chain is Small ribosomal subunit protein uS19c, found in Morus indica (Mulberry).